The following is a 256-amino-acid chain: Thiazole synthase (256 aa).

The Schiff-base intermediate with DXP role is filled by Lys-95. 1-deoxy-D-xylulose 5-phosphate contacts are provided by residues Gly-156, Ala-182 to Gly-183, and Asn-204 to Thr-205.

It belongs to the ThiG family. In terms of assembly, homotetramer. Forms heterodimers with either ThiH or ThiS.

It is found in the cytoplasm. It carries out the reaction [ThiS sulfur-carrier protein]-C-terminal-Gly-aminoethanethioate + 2-iminoacetate + 1-deoxy-D-xylulose 5-phosphate = [ThiS sulfur-carrier protein]-C-terminal Gly-Gly + 2-[(2R,5Z)-2-carboxy-4-methylthiazol-5(2H)-ylidene]ethyl phosphate + 2 H2O + H(+). It participates in cofactor biosynthesis; thiamine diphosphate biosynthesis. Catalyzes the rearrangement of 1-deoxy-D-xylulose 5-phosphate (DXP) to produce the thiazole phosphate moiety of thiamine. Sulfur is provided by the thiocarboxylate moiety of the carrier protein ThiS. In vitro, sulfur can be provided by H(2)S. This is Thiazole synthase from Klebsiella pneumoniae subsp. pneumoniae (strain ATCC 700721 / MGH 78578).